Here is a 433-residue protein sequence, read N- to C-terminus: ATP-dependent protease ATPase subunit HslU (433 aa).

ATP contacts are provided by residues I18, 60–65 (GVGKTE), D246, E311, and R383.

This sequence belongs to the ClpX chaperone family. HslU subfamily. A double ring-shaped homohexamer of HslV is capped on each side by a ring-shaped HslU homohexamer. The assembly of the HslU/HslV complex is dependent on binding of ATP.

It is found in the cytoplasm. ATPase subunit of a proteasome-like degradation complex; this subunit has chaperone activity. The binding of ATP and its subsequent hydrolysis by HslU are essential for unfolding of protein substrates subsequently hydrolyzed by HslV. HslU recognizes the N-terminal part of its protein substrates and unfolds these before they are guided to HslV for hydrolysis. This is ATP-dependent protease ATPase subunit HslU from Cereibacter sphaeroides (strain ATCC 17025 / ATH 2.4.3) (Rhodobacter sphaeroides).